The primary structure comprises 724 residues: Semaphorin-2A (724 aa).

The signal sequence occupies residues 1 to 25 (MSLLQLSPLLALLLLLCSSVSETAA). The Sema domain occupies 45-522 (QGNNNYGKHG…TDHRIKQIDL (478 aa)). Asn-95 is a glycosylation site (N-linked (GlcNAc...) asparagine). A disulfide bridge connects residues Cys-118 and Cys-129. N-linked (GlcNAc...) asparagine glycans are attached at residues Asn-163, Asn-190, Asn-229, and Asn-314. Disulfide bonds link Cys-291/Cys-399 and Cys-315/Cys-358. The N-linked (GlcNAc...) asparagine glycan is linked to Asn-401. Disulfide bonds link Cys-525-Cys-541 and Cys-535-Cys-550. One can recognise an Ig-like C2-type domain in the interval 552–663 (PYELDLLQDV…LCSYNITVDA (112 aa)). Residue Asn-563 is glycosylated (N-linked (GlcNAc...) asparagine). Cys-590 and Cys-647 form a disulfide bridge. Asn-658, Asn-670, and Asn-708 each carry an N-linked (GlcNAc...) asparagine glycan.

Belongs to the semaphorin family. In terms of assembly, interacts with PlexB. In terms of tissue distribution, transiently expressed by a single large muscle during motoneuron outgrowth and synapse formation.

The protein resides in the secreted. Its function is as follows. Ligand for transmembrane receptor PlexB. Plays a role in growth cone guidance. Required for both proper adult behavior and survival. Can function as a selective target-derived signal that inhibits the formation of specific synaptic terminal arbors. Function in neurons is essential for adult survival, motor neuron survival, and is important for climbing behavior and activity. During embryogenesis, plays an important role in correct salivary gland positioning. The sequence is that of Semaphorin-2A from Drosophila melanogaster (Fruit fly).